Here is a 117-residue protein sequence, read N- to C-terminus: Large ribosomal subunit protein uL22c (117 aa).

Belongs to the universal ribosomal protein uL22 family. As to quaternary structure, part of the 50S ribosomal subunit.

The protein resides in the plastid. It localises to the chloroplast. This protein binds specifically to 23S rRNA. Functionally, the globular domain of the protein is located near the polypeptide exit tunnel on the outside of the subunit, while an extended beta-hairpin is found that lines the wall of the exit tunnel in the center of the 70S ribosome. This Pyropia yezoensis (Susabi-nori) protein is Large ribosomal subunit protein uL22c (rpl22).